A 252-amino-acid polypeptide reads, in one-letter code: MSSINKKELEKFEKISHNWWNKNGEFGILHRINHIRIEYIIEKIKSNYNDISKLQILDVGCGGGLIAAPLALQGFNVTAIDALKSNVETATIYAQKNGLKINYLQATIEELENDKLYDVVICLEVIEHVANIQQFILNLVQHIKPNGIAIISTMNRTKKAYLFGIIVAEYILGWVPKNTHDYSKFVKPSEIYEILTDTNIEIKELKGLVFNLAKNEWKLSNDIDVNYFMCLEKKMNSLSSTCNGIPQLKRVI.

Residues Arg-36, Gly-60, Asp-81, and Leu-123 each coordinate S-adenosyl-L-methionine.

This sequence belongs to the methyltransferase superfamily. UbiG/COQ3 family.

It catalyses the reaction a 3-demethylubiquinol + S-adenosyl-L-methionine = a ubiquinol + S-adenosyl-L-homocysteine + H(+). It carries out the reaction a 3-(all-trans-polyprenyl)benzene-1,2-diol + S-adenosyl-L-methionine = a 2-methoxy-6-(all-trans-polyprenyl)phenol + S-adenosyl-L-homocysteine + H(+). It participates in cofactor biosynthesis; ubiquinone biosynthesis. In terms of biological role, O-methyltransferase that catalyzes the 2 O-methylation steps in the ubiquinone biosynthetic pathway. In Rickettsia prowazekii (strain Madrid E), this protein is Ubiquinone biosynthesis O-methyltransferase.